A 466-amino-acid polypeptide reads, in one-letter code: 23S rRNA (uracil(1939)-C(5))-methyltransferase RlmD (466 aa).

In terms of domain architecture, TRAM spans 1–54 (MVDVLNIESLDLEARGIAHRDGKVLFVEGALPGERVTVQTVRRKPSYEIAKVEE). Residues Cys-67, Cys-73, Cys-76, and Cys-155 each coordinate [4Fe-4S] cluster. 6 residues coordinate S-adenosyl-L-methionine: Gln-264, Phe-293, Asn-298, Glu-314, Asn-342, and Asp-363. The active-site Nucleophile is Cys-393.

This sequence belongs to the class I-like SAM-binding methyltransferase superfamily. RNA M5U methyltransferase family. RlmD subfamily.

It catalyses the reaction uridine(1939) in 23S rRNA + S-adenosyl-L-methionine = 5-methyluridine(1939) in 23S rRNA + S-adenosyl-L-homocysteine + H(+). Catalyzes the formation of 5-methyl-uridine at position 1939 (m5U1939) in 23S rRNA. The chain is 23S rRNA (uracil(1939)-C(5))-methyltransferase RlmD from Bordetella pertussis (strain Tohama I / ATCC BAA-589 / NCTC 13251).